A 210-amino-acid chain; its full sequence is Thiamine-phosphate synthase 2 (210 aa).

Residues 38–42 and Asp-70 each bind 4-amino-2-methyl-5-(diphosphooxymethyl)pyrimidine; that span reads QLREK. Residues Asp-71 and Glu-90 each contribute to the Mg(2+) site. Thr-109 lines the 4-amino-2-methyl-5-(diphosphooxymethyl)pyrimidine pocket. 135–137 is a 2-[(2R,5Z)-2-carboxy-4-methylthiazol-5(2H)-ylidene]ethyl phosphate binding site; sequence TTT. A 4-amino-2-methyl-5-(diphosphooxymethyl)pyrimidine-binding site is contributed by Lys-138. Gly-165 lines the 2-[(2R,5Z)-2-carboxy-4-methylthiazol-5(2H)-ylidene]ethyl phosphate pocket.

This sequence belongs to the thiamine-phosphate synthase family. The cofactor is Mg(2+).

It carries out the reaction 2-[(2R,5Z)-2-carboxy-4-methylthiazol-5(2H)-ylidene]ethyl phosphate + 4-amino-2-methyl-5-(diphosphooxymethyl)pyrimidine + 2 H(+) = thiamine phosphate + CO2 + diphosphate. The catalysed reaction is 2-(2-carboxy-4-methylthiazol-5-yl)ethyl phosphate + 4-amino-2-methyl-5-(diphosphooxymethyl)pyrimidine + 2 H(+) = thiamine phosphate + CO2 + diphosphate. It catalyses the reaction 4-methyl-5-(2-phosphooxyethyl)-thiazole + 4-amino-2-methyl-5-(diphosphooxymethyl)pyrimidine + H(+) = thiamine phosphate + diphosphate. Its pathway is cofactor biosynthesis; thiamine diphosphate biosynthesis; thiamine phosphate from 4-amino-2-methyl-5-diphosphomethylpyrimidine and 4-methyl-5-(2-phosphoethyl)-thiazole: step 1/1. In terms of biological role, condenses 4-methyl-5-(beta-hydroxyethyl)thiazole monophosphate (THZ-P) and 2-methyl-4-amino-5-hydroxymethyl pyrimidine pyrophosphate (HMP-PP) to form thiamine monophosphate (TMP). The chain is Thiamine-phosphate synthase 2 from Streptococcus pneumoniae serotype 4 (strain ATCC BAA-334 / TIGR4).